The sequence spans 30 residues: Cyclotide hyen-K (30 aa).

A cross-link (cyclopeptide (Gly-Asn)) is located at residues 1–30; the sequence is GIPCGESCIFIPCITTVVGCSCSNKVCYDN. 3 disulfides stabilise this stretch: Cys-4-Cys-20, Cys-8-Cys-22, and Cys-13-Cys-27.

In terms of processing, this is a cyclic peptide. In terms of tissue distribution, detected in seeds (at protein level).

In terms of biological role, probably participates in a plant defense mechanism. This chain is Cyclotide hyen-K, found in Pigea enneasperma (Spade flower).